The following is a 416-amino-acid chain: Adenylosuccinate synthetase (416 aa).

GTP is bound by residues 13-19 and 41-43; these read GDEGKGK and GHT. Catalysis depends on Asp14, which acts as the Proton acceptor. Residues Asp14 and Gly41 each contribute to the Mg(2+) site. Residues 14-17, 39-42, Thr126, Arg140, Gln220, Thr235, and Arg299 contribute to the IMP site; these read DEGK and NAGH. The active-site Proton donor is His42. Residue 295–301 coordinates substrate; that stretch reads VSTGRKR. GTP-binding positions include Arg301, 327 to 329, and 405 to 407; these read KLD and STS.

This sequence belongs to the adenylosuccinate synthetase family. In terms of assembly, homodimer. Requires Mg(2+) as cofactor.

It localises to the cytoplasm. It carries out the reaction IMP + L-aspartate + GTP = N(6)-(1,2-dicarboxyethyl)-AMP + GDP + phosphate + 2 H(+). Its pathway is purine metabolism; AMP biosynthesis via de novo pathway; AMP from IMP: step 1/2. Plays an important role in the de novo pathway of purine nucleotide biosynthesis. Catalyzes the first committed step in the biosynthesis of AMP from IMP. This Campylobacter jejuni subsp. jejuni serotype O:2 (strain ATCC 700819 / NCTC 11168) protein is Adenylosuccinate synthetase.